Here is a 271-residue protein sequence, read N- to C-terminus: Purine nucleoside phosphorylase 1 (271 aa).

Phosphate-binding positions include S28, H59, 79–81 (RFH), and A111. S28 is subject to Phosphoserine. E191 is an a purine D-ribonucleoside binding site. S210 contributes to the phosphate binding site. A purine D-ribonucleoside is bound at residue N233.

Belongs to the PNP/MTAP phosphorylase family. Homotrimer.

The catalysed reaction is a purine 2'-deoxy-D-ribonucleoside + phosphate = a purine nucleobase + 2-deoxy-alpha-D-ribose 1-phosphate. It participates in purine metabolism; purine nucleoside salvage. Its function is as follows. The purine nucleoside phosphorylases catalyze the phosphorolytic breakdown of the N-glycosidic bond in the beta-(deoxy)ribonucleoside molecules, with the formation of the corresponding free purine bases and pentose-1-phosphate. Cleaves guanosine, inosine, 2'-deoxyguanosine and 2'-deoxyinosine. The sequence is that of Purine nucleoside phosphorylase 1 (punA) from Bacillus subtilis (strain 168).